A 298-amino-acid polypeptide reads, in one-letter code: ATP phosphoribosyltransferase (298 aa).

Belongs to the ATP phosphoribosyltransferase family. Long subfamily. Mg(2+) serves as cofactor.

The protein resides in the cytoplasm. It carries out the reaction 1-(5-phospho-beta-D-ribosyl)-ATP + diphosphate = 5-phospho-alpha-D-ribose 1-diphosphate + ATP. It functions in the pathway amino-acid biosynthesis; L-histidine biosynthesis; L-histidine from 5-phospho-alpha-D-ribose 1-diphosphate: step 1/9. With respect to regulation, feedback inhibited by histidine. In terms of biological role, catalyzes the condensation of ATP and 5-phosphoribose 1-diphosphate to form N'-(5'-phosphoribosyl)-ATP (PR-ATP). Has a crucial role in the pathway because the rate of histidine biosynthesis seems to be controlled primarily by regulation of HisG enzymatic activity. The chain is ATP phosphoribosyltransferase from Aeromonas hydrophila subsp. hydrophila (strain ATCC 7966 / DSM 30187 / BCRC 13018 / CCUG 14551 / JCM 1027 / KCTC 2358 / NCIMB 9240 / NCTC 8049).